We begin with the raw amino-acid sequence, 134 residues long: Large ribosomal subunit protein uL16c (134 aa).

This sequence belongs to the universal ribosomal protein uL16 family. Part of the 50S ribosomal subunit.

Its subcellular location is the plastid. The protein resides in the chloroplast. The chain is Large ribosomal subunit protein uL16c from Oltmannsiellopsis viridis (Marine flagellate).